The following is a 72-amino-acid chain: Translation initiation factor IF-1 (72 aa).

Residues 1-72 (MAKADVIEVE…TKGRITFRFK (72 aa)) form the S1-like domain.

The protein belongs to the IF-1 family. Component of the 30S ribosomal translation pre-initiation complex which assembles on the 30S ribosome in the order IF-2 and IF-3, IF-1 and N-formylmethionyl-tRNA(fMet); mRNA recruitment can occur at any time during PIC assembly.

The protein localises to the cytoplasm. Its function is as follows. One of the essential components for the initiation of protein synthesis. Stabilizes the binding of IF-2 and IF-3 on the 30S subunit to which N-formylmethionyl-tRNA(fMet) subsequently binds. Helps modulate mRNA selection, yielding the 30S pre-initiation complex (PIC). Upon addition of the 50S ribosomal subunit IF-1, IF-2 and IF-3 are released leaving the mature 70S translation initiation complex. The chain is Translation initiation factor IF-1 from Limosilactobacillus reuteri (strain DSM 20016) (Lactobacillus reuteri).